Consider the following 524-residue polypeptide: Probable metalloreductase AIM14 (524 aa).

The next 7 helical transmembrane spans lie at 24–44, 69–89, 104–121, 143–163, 179–199, 206–226, and 230–250; these read VNIKYGYVILALSIVHMVLSI, SIPFWVSTLVWLAIFAFLSIF, RLGRMAYCLVPFTIFISL, WISRLIFATAIGHGLGFLYKW, FLGVTVFALMPVLIFASVNVM, LFYILHNVTLWMFVVLIAFHA, and VPLLAVINLALLGYQIYQRFF. The Ferric oxidoreductase domain maps to 105-222; it reads LGRMAYCLVP…VTLWMFVVLI (118 aa). An FAD-binding FR-type domain is found at 248–372; sequence RFFKSYYLHD…GGSGISFGLP (125 aa).

The protein belongs to the ferric reductase (FRE) family. AIM14 subfamily.

It localises to the membrane. Its function is as follows. Probable cell surface metalloreductase. May be involved in iron or copper homeostasis. The chain is Probable metalloreductase AIM14 (AIM14) from Scheffersomyces stipitis (strain ATCC 58785 / CBS 6054 / NBRC 10063 / NRRL Y-11545) (Yeast).